The primary structure comprises 2136 residues: U5 small nuclear ribonucleoprotein 200 kDa helicase (2136 aa).

Phosphoserine is present on residues S17 and S26. Residue K46 forms a Glycyl lysine isopeptide (Lys-Gly) (interchain with G-Cter in SUMO2) linkage. A disordered region spans residues 50-80; sequence TRMGDKAQRTKPQMQEERRAKRRKRDEDRHD. The stretch at 54-84 forms a coiled coil; sequence DKAQRTKPQMQEERRAKRRKRDEDRHDINKM. S225 bears the Phosphoserine mark. T389 carries the post-translational modification Phosphothreonine. The segment at 395-2129 is interaction with C9orf78 and WBP4; that stretch reads DLDQGGEALA…YKFSVDVKEA (1735 aa). Positions 490 to 673 constitute a Helicase ATP-binding 1 domain; sequence RAALETDENL…FLRVDPAKGL (184 aa). 503–510 provides a ligand contact to ATP; that stretch reads APTGAGKT. The DEIH box motif lies at 615-618; that stretch reads DEIH. One can recognise a Helicase C-terminal 1 domain in the interval 684-921; the sequence is PLEQTYVGIT…NAKDAVNWLG (238 aa). Y709 carries the phosphotyrosine modification. N6-acetyllysine is present on K971. The 306-residue stretch at 981 to 1286 folds into the SEC63 1 domain; that stretch reads VTELGRIASH…SCETQLPVSF (306 aa). Residues 1282–2136 are interaction with TSSC4; it reads LPVSFRHLIL…KEAETDSDSD (855 aa). In terms of domain architecture, Helicase ATP-binding 2 spans 1337–1512; the sequence is NTVYNSDDNV…WLGCSATSTF (176 aa). An ATP-binding site is contributed by 1350-1357; sequence APTGSGKT. T1428 carries the post-translational modification Phosphothreonine. The DEVH box signature appears at 1454 to 1457; the sequence is DEVH. The 209-residue stretch at 1545–1753 folds into the Helicase C-terminal 2 domain; that stretch reads PVYHAITKHS…TIENKQDAVD (209 aa). Position 1765 is a phosphothreonine (T1765). The region spanning 1812-2124 is the SEC63 2 domain; sequence PLNLGMIAAY…GCDQEYKFSV (313 aa). S2002 carries the post-translational modification Phosphoserine. T2131 carries the post-translational modification Phosphothreonine. 2 positions are modified to phosphoserine: S2133 and S2135.

It belongs to the helicase family. SKI2 subfamily. In terms of assembly, component of a core complex containing at least PRPF8, SNRNP200, EFTUD2 and SNRNP40. Component of the U5 snRNP and U4/U6-U5 tri-snRNP complexes, building blocks of the spliceosome. Component of the U4/U6-U5 tri-snRNP complex composed of the U4, U6 and U5 snRNAs and at least PRPF3, PRPF4, PRPF6, PRPF8, PRPF31, SNRNP200, TXNL4A, SNRNP40, DDX23, CD2BP2, PPIH, SNU13, EFTUD2, SART1 and USP39. Component of precatalytic, catalytic and postcatalytic spliceosomal complexes. Component of the minor spliceosome, which splices U12-type introns. Interacts with C9orf78; the interaction is direct and mutually exclusive with its interaction with WBP4. Interacts with WBP4; the interaction is mutually exclusive with its interaction with C9orf78. Interacts with PRPF8. Interacts with TSSC4; the interaction is direct, excludes recruitment of C9ORF78 and WBP4 to SNRNP200 and negatively regulates its RNA helicase activity. In terms of tissue distribution, widely expressed.

Its subcellular location is the nucleus. It carries out the reaction ATP + H2O = ADP + phosphate + H(+). Functionally, catalyzes the ATP-dependent unwinding of U4/U6 RNA duplices, an essential step in the assembly of a catalytically active spliceosome. Plays a role in pre-mRNA splicing as a core component of precatalytic, catalytic and postcatalytic spliceosomal complexes. As a component of the minor spliceosome, involved in the splicing of U12-type introns in pre-mRNAs. Involved in spliceosome assembly, activation and disassembly. Mediates changes in the dynamic network of RNA-RNA interactions in the spliceosome. The polypeptide is U5 small nuclear ribonucleoprotein 200 kDa helicase (SNRNP200) (Homo sapiens (Human)).